We begin with the raw amino-acid sequence, 89 residues long: uncharacterized protein (89 aa).

3 helical membrane passes run 5 to 27 (TLTE…GFTA), 32 to 51 (LYIG…KRLL), and 63 to 85 (LFFS…ALVA).

Its subcellular location is the cell membrane. This is an uncharacterized protein from Bacillus subtilis (strain 168).